Here is a 124-residue protein sequence, read N- to C-terminus: MEIIPFGTNDIDNILAREPARAESLPFGAVLLDRMGRIAKYNKAEGLIAGRDPSTVIGRDFFNEIAPCAKGKRFHGEFLKFNRTGQANVMLDYKFNYKGAEVAVKIHLKSQPDGQFCWLFVKRA.

The PAS domain occupies Ala22–Gly85. At Cys68 the chain carries S-(4-hydroxycinnamyl)cysteine.

Belongs to the photoactive yellow protein family. In terms of processing, the 4-hydroxycinnamic acid (p-coumaric acid) chromophore is covalently bound via a thioester linkage.

Its function is as follows. This photoactive protein is a photoreceptor with kinetics similar to that of rhodopsin. This Rhodobacter capsulatus (strain ATCC BAA-309 / NBRC 16581 / SB1003) protein is Photoactive yellow protein (pyp).